We begin with the raw amino-acid sequence, 291 residues long: Ribosomal RNA small subunit methyltransferase A (291 aa).

Residues Asn27, Leu29, Gly54, Glu75, Asp100, and Asn125 each coordinate S-adenosyl-L-methionine.

The protein belongs to the class I-like SAM-binding methyltransferase superfamily. rRNA adenine N(6)-methyltransferase family. RsmA subfamily.

It localises to the cytoplasm. The enzyme catalyses adenosine(1518)/adenosine(1519) in 16S rRNA + 4 S-adenosyl-L-methionine = N(6)-dimethyladenosine(1518)/N(6)-dimethyladenosine(1519) in 16S rRNA + 4 S-adenosyl-L-homocysteine + 4 H(+). Specifically dimethylates two adjacent adenosines (A1518 and A1519) in the loop of a conserved hairpin near the 3'-end of 16S rRNA in the 30S particle. May play a critical role in biogenesis of 30S subunits. This chain is Ribosomal RNA small subunit methyltransferase A, found in Streptococcus mutans serotype c (strain ATCC 700610 / UA159).